Consider the following 464-residue polypeptide: ATP synthase subunit beta (464 aa).

Glycine 153–threonine 160 contributes to the ATP binding site.

It belongs to the ATPase alpha/beta chains family. F-type ATPases have 2 components, CF(1) - the catalytic core - and CF(0) - the membrane proton channel. CF(1) has five subunits: alpha(3), beta(3), gamma(1), delta(1), epsilon(1). CF(0) has three main subunits: a(1), b(2) and c(9-12). The alpha and beta chains form an alternating ring which encloses part of the gamma chain. CF(1) is attached to CF(0) by a central stalk formed by the gamma and epsilon chains, while a peripheral stalk is formed by the delta and b chains.

Its subcellular location is the cell inner membrane. The enzyme catalyses ATP + H2O + 4 H(+)(in) = ADP + phosphate + 5 H(+)(out). Its function is as follows. Produces ATP from ADP in the presence of a proton gradient across the membrane. The catalytic sites are hosted primarily by the beta subunits. This chain is ATP synthase subunit beta, found in Burkholderia orbicola (strain MC0-3).